The following is a 356-amino-acid chain: GTPase Obg (356 aa).

Positions 1–159 constitute an Obg domain; that stretch reads MKFLDEAKVY…RWIWLRMKLI (159 aa). An OBG-type G domain is found at 160–327; the sequence is ADAGLVGLPN…ALRKLADVVG (168 aa). GTP-binding positions include 166 to 173, 191 to 195, 212 to 215, 279 to 282, and 308 to 310; these read GLPNAGKS, FTTLH, DIPG, NKID, and SGA. Positions 173 and 193 each coordinate Mg(2+). The interval 327–356 is disordered; sequence GEQPVSSKAKNAVESAATEEPWAAPVPPQG.

The protein belongs to the TRAFAC class OBG-HflX-like GTPase superfamily. OBG GTPase family. As to quaternary structure, monomer. Mg(2+) is required as a cofactor.

The protein localises to the cytoplasm. An essential GTPase which binds GTP, GDP and possibly (p)ppGpp with moderate affinity, with high nucleotide exchange rates and a fairly low GTP hydrolysis rate. Plays a role in control of the cell cycle, stress response, ribosome biogenesis and in those bacteria that undergo differentiation, in morphogenesis control. This chain is GTPase Obg, found in Bradyrhizobium sp. (strain ORS 278).